The primary structure comprises 982 residues: Glycine dehydrogenase (decarboxylating) (982 aa).

The residue at position 729 (Lys-729) is an N6-(pyridoxal phosphate)lysine.

Belongs to the GcvP family. As to quaternary structure, the glycine cleavage system is composed of four proteins: P, T, L and H. Pyridoxal 5'-phosphate serves as cofactor.

It carries out the reaction N(6)-[(R)-lipoyl]-L-lysyl-[glycine-cleavage complex H protein] + glycine + H(+) = N(6)-[(R)-S(8)-aminomethyldihydrolipoyl]-L-lysyl-[glycine-cleavage complex H protein] + CO2. The glycine cleavage system catalyzes the degradation of glycine. The P protein binds the alpha-amino group of glycine through its pyridoxal phosphate cofactor; CO(2) is released and the remaining methylamine moiety is then transferred to the lipoamide cofactor of the H protein. The protein is Glycine dehydrogenase (decarboxylating) of Ralstonia nicotianae (strain ATCC BAA-1114 / GMI1000) (Ralstonia solanacearum).